We begin with the raw amino-acid sequence, 414 residues long: Protein IQ-DOMAIN 8 (414 aa).

A Nuclear localization signal 1 motif is present at residues 14-21 (NKKNITDD). Positions 40–61 (LISSSKGFKSRGGSYGTPSLGS) are disordered. IQ domains follow at residues 92-120 (REWAATRIQAAFRAFLARQALRALKAVVR), 121-143 (IQAIFRGRQVRKQADVTLRCMQA), and 144-169 (LVRVQARVRAHCNRGPSDGQELEKPS). A calmodulin-binding region spans residues 119–132 (VRIQAIFRGRQVRK). 3 disordered regions span residues 156–190 (NRGPSDGQELEKPSDQQKDDPAKQAEKGWCDSPGS), 218–244 (HQPRTCPSPAKASKQGSVKKNNGSCKS), and 262–329 (GRLM…SGSF). Over residues 164 to 184 (ELEKPSDQQKDDPAKQAEKGW) the composition is skewed to basic and acidic residues. Residues 231–244 (KQGSVKKNNGSCKS) show a composition bias toward polar residues. Residues 274 to 289 (NARKSESSVSEHDTVQ) are compositionally biased toward basic and acidic residues. Residues 307 to 328 (SSSATSSESSSTSQSPVPFSGS) are compositionally biased toward low complexity. The Nuclear localization signal 2 signature appears at 336 to 343 (YRKPSYMS). The segment at 347–398 (SIKAKQRRSGSSSSCSKTPFEKKQSMSYNGDVNVRRSAGSDPLNNQWTDLYP) is disordered.

This sequence belongs to the IQD family. As to quaternary structure, binds to multiple calmodulin (CaM) in the presence of Ca(2+) and CaM-like proteins.

The protein resides in the nucleus. Its subcellular location is the cytoplasm. The protein localises to the cytoskeleton. It is found in the nucleus envelope. Its function is as follows. May be involved in cooperative interactions with calmodulins or calmodulin-like proteins. Recruits calmodulin proteins to microtubules, thus being a potential scaffold in cellular signaling and trafficking. May associate with nucleic acids and regulate gene expression at the transcriptional or post-transcriptional level. In Arabidopsis thaliana (Mouse-ear cress), this protein is Protein IQ-DOMAIN 8.